We begin with the raw amino-acid sequence, 88 residues long: Small ribosomal subunit protein bS20 (88 aa).

It belongs to the bacterial ribosomal protein bS20 family.

Its function is as follows. Binds directly to 16S ribosomal RNA. This Desulforamulus reducens (strain ATCC BAA-1160 / DSM 100696 / MI-1) (Desulfotomaculum reducens) protein is Small ribosomal subunit protein bS20.